Here is a 418-residue protein sequence, read N- to C-terminus: Tyrosine--tRNA ligase (418 aa).

The short motif at 42-51 (PTAPDLHLGH) is the 'HIGH' region element. The 'KMSKS' region signature appears at 226–230 (KMSKS). Residue lysine 229 participates in ATP binding. An S4 RNA-binding domain is found at 339-400 (VRLVALLTKS…GKRNFAKVRL (62 aa)).

The protein belongs to the class-I aminoacyl-tRNA synthetase family. TyrS type 2 subfamily. In terms of assembly, homodimer.

The protein localises to the cytoplasm. The enzyme catalyses tRNA(Tyr) + L-tyrosine + ATP = L-tyrosyl-tRNA(Tyr) + AMP + diphosphate + H(+). In terms of biological role, catalyzes the attachment of tyrosine to tRNA(Tyr) in a two-step reaction: tyrosine is first activated by ATP to form Tyr-AMP and then transferred to the acceptor end of tRNA(Tyr). The sequence is that of Tyrosine--tRNA ligase from Xylella fastidiosa (strain 9a5c).